We begin with the raw amino-acid sequence, 232 residues long: 2-C-methyl-D-erythritol 4-phosphate cytidylyltransferase (232 aa).

This sequence belongs to the IspD/TarI cytidylyltransferase family. IspD subfamily.

It catalyses the reaction 2-C-methyl-D-erythritol 4-phosphate + CTP + H(+) = 4-CDP-2-C-methyl-D-erythritol + diphosphate. Its pathway is isoprenoid biosynthesis; isopentenyl diphosphate biosynthesis via DXP pathway; isopentenyl diphosphate from 1-deoxy-D-xylulose 5-phosphate: step 2/6. In terms of biological role, catalyzes the formation of 4-diphosphocytidyl-2-C-methyl-D-erythritol from CTP and 2-C-methyl-D-erythritol 4-phosphate (MEP). This chain is 2-C-methyl-D-erythritol 4-phosphate cytidylyltransferase, found in Nitrosospira multiformis (strain ATCC 25196 / NCIMB 11849 / C 71).